Reading from the N-terminus, the 203-residue chain is MSRYTGPSWKQARRLGLSLTGTGKELARRNYVPGQHGPNNRSKLSEYGLQLAEKQKLRFTYGVGEKQFRNLFVQATKIKGGILGFNFMLLLERRLDNVVYRLGLATTRRQARQFVNHGHILVDGKRVDIPSYRVTPGQVISVREKSLKVPAILEAVEATLGRPAFVSFDAEKLEGSLTRLPERDEINPEINEALVVEFYNKML.

One can recognise an S4 RNA-binding domain in the interval 93-156; that stretch reads RRLDNVVYRL…LKVPAILEAV (64 aa).

The protein belongs to the universal ribosomal protein uS4 family. Part of the 30S ribosomal subunit. Contacts protein S5. The interaction surface between S4 and S5 is involved in control of translational fidelity.

Its function is as follows. One of the primary rRNA binding proteins, it binds directly to 16S rRNA where it nucleates assembly of the body of the 30S subunit. In terms of biological role, with S5 and S12 plays an important role in translational accuracy. The polypeptide is Small ribosomal subunit protein uS4 (Streptococcus pneumoniae serotype 2 (strain D39 / NCTC 7466)).